Reading from the N-terminus, the 141-residue chain is Large ribosomal subunit protein uL16 (141 aa).

This sequence belongs to the universal ribosomal protein uL16 family. In terms of assembly, part of the 50S ribosomal subunit.

Functionally, binds 23S rRNA and is also seen to make contacts with the A and possibly P site tRNAs. In Deinococcus geothermalis (strain DSM 11300 / CIP 105573 / AG-3a), this protein is Large ribosomal subunit protein uL16.